A 274-amino-acid chain; its full sequence is Peroxiredoxin-4 (274 aa).

An N-terminal signal peptide occupies residues 1–40; that stretch reads MEARSKLLDGTTASRRWTRKLVLLLPPLLLFLLRTESLQG. The Thioredoxin domain occupies 82 to 240; that stretch reads AKISKPAPYW…TLRLVQAFQY (159 aa). The Cysteine sulfenic acid (-SOH) intermediate role is filled by Cys127.

It belongs to the peroxiredoxin family. AhpC/Prx1 subfamily. As to quaternary structure, homodimer; disulfide-linked, upon oxidation. 5 homodimers assemble to form a ring-like decamer. Post-translationally, the enzyme can be inactivated by further oxidation of the cysteine sulfenic acid (C(P)-SOH) to sulphinic acid (C(P)-SO2H) and sulphonic acid (C(P)-SO3H) instead of its condensation to a disulfide bond.

Its subcellular location is the cytoplasm. It localises to the endoplasmic reticulum. The catalysed reaction is a hydroperoxide + [thioredoxin]-dithiol = an alcohol + [thioredoxin]-disulfide + H2O. Its function is as follows. Thiol-specific peroxidase that catalyzes the reduction of hydrogen peroxide and organic hydroperoxides to water and alcohols, respectively. Plays a role in cell protection against oxidative stress by detoxifying peroxides and as sensor of hydrogen peroxide-mediated signaling events. Regulates the activation of NF-kappa-B in the cytosol by a modulation of I-kappa-B-alpha phosphorylation. The protein is Peroxiredoxin-4 (Prdx4) of Mus musculus (Mouse).